We begin with the raw amino-acid sequence, 973 residues long: Leucine--tRNA ligase, chloroplastic/mitochondrial (973 aa).

Positions 126–135 match the 'HIGH' region motif; the sequence is PSGAGLHVGH. The 'KMSKS' region signature appears at 730–734; the sequence is KMSKS. K733 lines the ATP pocket.

The protein belongs to the class-I aminoacyl-tRNA synthetase family.

It is found in the plastid. Its subcellular location is the chloroplast. It localises to the mitochondrion. The enzyme catalyses tRNA(Leu) + L-leucine + ATP = L-leucyl-tRNA(Leu) + AMP + diphosphate. Functionally, catalyzes the specific attachment of an amino acid to its cognate tRNA in a two step reaction: the amino acid (AA) is first activated by ATP to form AA-AMP and then transferred to the acceptor end of the tRNA. In Arabidopsis thaliana (Mouse-ear cress), this protein is Leucine--tRNA ligase, chloroplastic/mitochondrial.